We begin with the raw amino-acid sequence, 840 residues long: Putative pentatricopeptide repeat-containing protein At1g31840 (840 aa).

PPR repeat units lie at residues 98–128, 145–179, 180–214, 216–250, 251–284, 285–319, 320–354, 355–389, 390–424, 425–459, 460–494, 495–529, 530–564, 565–599, 600–634, 635–669, 670–704, 705–739, 740–774, and 775–809; these read KDPS…MITN, DADV…GVVI, PQDS…GIEP, GVSA…GFRV, GIVS…GPAP, NVVT…GIEP, DLIA…GVKL, DVVV…GISP, NVVT…GMEP, SIVT…GYPP, DVVI…SIRL, NVVV…GIKP, DVAT…GLEP, DALA…KISA, DIAV…KMEP, DIVT…PFGP, NTVT…GSKP, NAVT…GISP, SIVS…KLLP, and DVVA…GVKP.

Belongs to the PPR family. P subfamily.

This chain is Putative pentatricopeptide repeat-containing protein At1g31840, found in Arabidopsis thaliana (Mouse-ear cress).